Consider the following 239-residue polypeptide: Aspartate/glutamate leucyltransferase (239 aa).

The protein belongs to the R-transferase family. Bpt subfamily.

Its subcellular location is the cytoplasm. The catalysed reaction is N-terminal L-glutamyl-[protein] + L-leucyl-tRNA(Leu) = N-terminal L-leucyl-L-glutamyl-[protein] + tRNA(Leu) + H(+). It carries out the reaction N-terminal L-aspartyl-[protein] + L-leucyl-tRNA(Leu) = N-terminal L-leucyl-L-aspartyl-[protein] + tRNA(Leu) + H(+). In terms of biological role, functions in the N-end rule pathway of protein degradation where it conjugates Leu from its aminoacyl-tRNA to the N-termini of proteins containing an N-terminal aspartate or glutamate. In Campylobacter jejuni subsp. jejuni serotype O:23/36 (strain 81-176), this protein is Aspartate/glutamate leucyltransferase.